We begin with the raw amino-acid sequence, 89 residues long: uncharacterized protein (89 aa).

The next 3 helical transmembrane spans lie at 9–29 (ICNFLFQFSLEFFSISSLHSI), 35–55 (ISLSLSLFFLVAILYNIYIYL), and 65–85 (ILFAIPPLCPLCSPCFFFGTS).

The protein localises to the membrane. This is an uncharacterized protein from Schizosaccharomyces pombe (strain 972 / ATCC 24843) (Fission yeast).